Consider the following 501-residue polypeptide: Aspartyl/glutamyl-tRNA(Asn/Gln) amidotransferase subunit B (501 aa).

Belongs to the GatB/GatE family. GatB subfamily. In terms of assembly, heterotrimer of A, B and C subunits.

The catalysed reaction is L-glutamyl-tRNA(Gln) + L-glutamine + ATP + H2O = L-glutaminyl-tRNA(Gln) + L-glutamate + ADP + phosphate + H(+). It catalyses the reaction L-aspartyl-tRNA(Asn) + L-glutamine + ATP + H2O = L-asparaginyl-tRNA(Asn) + L-glutamate + ADP + phosphate + 2 H(+). In terms of biological role, allows the formation of correctly charged Asn-tRNA(Asn) or Gln-tRNA(Gln) through the transamidation of misacylated Asp-tRNA(Asn) or Glu-tRNA(Gln) in organisms which lack either or both of asparaginyl-tRNA or glutaminyl-tRNA synthetases. The reaction takes place in the presence of glutamine and ATP through an activated phospho-Asp-tRNA(Asn) or phospho-Glu-tRNA(Gln). This is Aspartyl/glutamyl-tRNA(Asn/Gln) amidotransferase subunit B from Agrobacterium fabrum (strain C58 / ATCC 33970) (Agrobacterium tumefaciens (strain C58)).